The chain runs to 898 residues: Serine/threonine-protein kinase PKH3 (898 aa).

The region spanning 11–293 is the Protein kinase domain; sequence FIFKEELGHG…LEQIKRHPYF (283 aa). Residues 17–25 and Lys41 contribute to the ATP site; that span reads LGHGSYSTV. The active-site Proton acceptor is the Asp138. Disordered stretches follow at residues 435 to 484 and 675 to 850; these read PPKV…PSTE and DSKA…EKYS. A compositionally biased stretch (polar residues) spans 459–468; that stretch reads PLQTSSIPQK. Low complexity predominate over residues 469-483; the sequence is LSTSSASSALSAPST. Residue Ser696 is modified to Phosphoserine. Residues 697 to 721 show a composition bias toward polar residues; sequence IGNNVTTLSYTAKNGSQNNAPQNDN. The span at 723–738 shows a compositional bias: basic and acidic residues; the sequence is GEEKPFRIPSSTKDRP. Polar residues-rich tracts occupy residues 740–758, 771–782, and 789–803; these read ANST…NNAG, SAPSTNTYTNGS, and RPST…NILT. At Ser753 the chain carries Phosphoserine. Residues 804 to 817 show a composition bias toward low complexity; that stretch reads SKKQGSSVFSPSSS. Positions 818 to 831 are enriched in polar residues; that stretch reads TTKPQIKTTGYRQP. Phosphoserine is present on Ser871.

Belongs to the protein kinase superfamily. Ser/Thr protein kinase family.

It catalyses the reaction L-seryl-[protein] + ATP = O-phospho-L-seryl-[protein] + ADP + H(+). The catalysed reaction is L-threonyl-[protein] + ATP = O-phospho-L-threonyl-[protein] + ADP + H(+). Its function is as follows. Serine/threonine-protein kinase which may phosphorylate the same targets substrates as PKH1 and PKH2, 2 upstream activators of PKC1. This Saccharomyces cerevisiae (strain ATCC 204508 / S288c) (Baker's yeast) protein is Serine/threonine-protein kinase PKH3 (PKH3).